The primary structure comprises 147 residues: Large ribosomal subunit protein uL15 (147 aa).

The segment covering 1 to 13 has biased composition (basic and acidic residues); that stretch reads MKLENLKSKEGSR. The tract at residues 1–54 is disordered; sequence MKLENLKSKEGSRHKTKRVGRGFGSGIGKTSTRGSKGQKSRKSGHTRPGFEGGQ. Positions 36 to 45 are enriched in basic residues; that stretch reads KGQKSRKSGH.

It belongs to the universal ribosomal protein uL15 family. Part of the 50S ribosomal subunit.

Functionally, binds to the 23S rRNA. The chain is Large ribosomal subunit protein uL15 from Malacoplasma penetrans (strain HF-2) (Mycoplasma penetrans).